A 92-amino-acid polypeptide reads, in one-letter code: Putative pterin-4-alpha-carbinolamine dehydratase (92 aa).

The protein belongs to the pterin-4-alpha-carbinolamine dehydratase family.

The catalysed reaction is (4aS,6R)-4a-hydroxy-L-erythro-5,6,7,8-tetrahydrobiopterin = (6R)-L-erythro-6,7-dihydrobiopterin + H2O. The sequence is that of Putative pterin-4-alpha-carbinolamine dehydratase from Haloarcula marismortui (strain ATCC 43049 / DSM 3752 / JCM 8966 / VKM B-1809) (Halobacterium marismortui).